The primary structure comprises 58 residues: Small ribosomal subunit protein bS21 (58 aa).

Residues 36–58 (RHHETPVEKYKRKLQQRRRSRRR) form a disordered region. Positions 45–58 (YKRKLQQRRRSRRR) are enriched in basic residues.

This sequence belongs to the bacterial ribosomal protein bS21 family.

This Prochlorococcus marinus (strain NATL1A) protein is Small ribosomal subunit protein bS21.